The chain runs to 278 residues: Putative transposase for insertion sequence element IS986/IS6110 (278 aa).

Residues 101–268 (GPPAPNRLWV…VPPVELEAAY (168 aa)) form the Integrase catalytic domain.

In terms of biological role, involved in the transposition of the insertion sequence. The chain is Putative transposase for insertion sequence element IS986/IS6110 from Mycobacterium tuberculosis (strain CDC 1551 / Oshkosh).